Reading from the N-terminus, the 1782-residue chain is Vitellogenin receptor (1782 aa).

An N-terminal signal peptide occupies residues 1–18; the sequence is MRFIVLLFICSFIYPCYV. At 19–1663 the chain is on the extracellular side; that stretch reads SSIGFRRISK…SINFSRNTRN (1645 aa). LDL-receptor class A domains lie at 35-72, 81-118, and 122-157; these read KCED…FECD, TCAK…DGCV, and NCTN…WNCK. Intrachain disulfides connect cysteine 36-cysteine 48, cysteine 43-cysteine 61, cysteine 55-cysteine 71, cysteine 82-cysteine 94, cysteine 89-cysteine 107, and cysteine 101-cysteine 117. A glycan (N-linked (GlcNAc...) asparagine) is linked at asparagine 122. Intrachain disulfides connect cysteine 123-cysteine 134, cysteine 129-cysteine 147, and cysteine 141-cysteine 156. N-linked (GlcNAc...) asparagine glycosylation occurs at asparagine 159. The 40-residue stretch at 166 to 205 folds into the LDL-receptor class A 4 domain; sequence SCKTENYQYMCANHRCISLKVVCDKKDDCGDGSDEGPGCT. 3 cysteine pairs are disulfide-bonded: cysteine 167/cysteine 181, cysteine 176/cysteine 194, and cysteine 188/cysteine 204. Residues asparagine 208 and asparagine 239 are each glycosylated (N-linked (GlcNAc...) asparagine). The 36-residue stretch at 208 to 243 folds into the EGF-like 1 domain; the sequence is NCSSAGCQSNCHQTPKGSVCTCKPGYKLQKDNRTCN. In terms of domain architecture, EGF-like; calcium-binding spans 244–283; the sequence is DIDECQAYGICDQDCMNVPGSYACTCQREYYLENDKRTCK. 3 disulfide bridges follow: cysteine 248–cysteine 258, cysteine 254–cysteine 267, and cysteine 269–cysteine 282. LDL-receptor class B repeat units follow at residues 327–374, 375–416, 417–460, 461–501, and 502–544; these read DYVY…DWIT, KNIY…LPTQ, GKMY…DYPN, ERLY…TVFQ, and NKLY…DHSA. An EGF-like 2 domain is found at 552 to 588; the sequence is PCYSNPCSQLCMLNQNKGYTCGCTLDKKLNADKHTCQ. N-linked (GlcNAc...) asparagine glycosylation is found at asparagine 702, asparagine 859, asparagine 896, and asparagine 923. The EGF-like 3 domain maps to 889–927; the sequence is DCQKNNGNCSHVCLPSLITSFICACPPGMELSNDNRTCI. LDL-receptor class A domains lie at 931–969, 973–1009, 1012–1049, 1052–1090, and 1094–1131; these read ECSK…SECR, RCKE…QNCE, KCKS…EDCR, ECTS…EKCY, and ACKM…VHCL. Disulfide bonds link cysteine 932–cysteine 945, cysteine 939–cysteine 958, cysteine 952–cysteine 968, cysteine 974–cysteine 986, cysteine 981–cysteine 999, cysteine 993–cysteine 1008, cysteine 1013–cysteine 1026, cysteine 1020–cysteine 1039, cysteine 1033–cysteine 1048, cysteine 1053–cysteine 1065, cysteine 1060–cysteine 1078, cysteine 1072–cysteine 1089, cysteine 1095–cysteine 1108, cysteine 1103–cysteine 1121, and cysteine 1115–cysteine 1130. 2 N-linked (GlcNAc...) asparagine glycosylation sites follow: asparagine 1133 and asparagine 1140. 3 LDL-receptor class A domains span residues 1140 to 1177, 1178 to 1214, and 1225 to 1260; these read NCSL…QNCT, YCFE…KNCD, and ECDE…GKCQ. 9 disulfide bridges follow: cysteine 1141/cysteine 1154, cysteine 1148/cysteine 1167, cysteine 1161/cysteine 1176, cysteine 1179/cysteine 1191, cysteine 1186/cysteine 1204, cysteine 1198/cysteine 1213, cysteine 1226/cysteine 1236, cysteine 1231/cysteine 1249, and cysteine 1243/cysteine 1259. N-linked (GlcNAc...) asparagine glycosylation occurs at asparagine 1175. The region spanning 1262 to 1298 is the EGF-like 4 domain; that stretch reads ACTVNNFCKGMCYKTPAGAVCGCQSGYRLAVDMISCE. LDL-receptor class B repeat units lie at residues 1385-1425, 1471-1518, and 1519-1561; these read DSVY…DWIT, RWLF…DHVK, and SKLY…FEQS. N-linked (GlcNAc...) asparagine glycans are attached at residues asparagine 1626, asparagine 1640, and asparagine 1656. The chain crosses the membrane as a helical span at residues 1664–1684; sequence ISGIYSITIIVLLVSVLLLCV. Over 1685–1782 the chain is Cytoplasmic; the sequence is YYYYQKNKLK…ALIYFVHNSK (98 aa).

Expressed in ovaries of reproductive females.

Its subcellular location is the membrane. Its function is as follows. Involved in uptake of vitellogenin by endocytosis. Expression is regulated by the juvenile hormone analog, methoprene (in vitro). The polypeptide is Vitellogenin receptor (Solenopsis invicta (Red imported fire ant)).